Consider the following 138-residue polypeptide: Putative nickel-responsive regulator (138 aa).

His-78, His-89, His-91, and Cys-97 together coordinate Ni(2+).

This sequence belongs to the transcriptional regulatory CopG/NikR family. Requires Ni(2+) as cofactor.

Functionally, transcriptional regulator. The chain is Putative nickel-responsive regulator from Pyrococcus horikoshii (strain ATCC 700860 / DSM 12428 / JCM 9974 / NBRC 100139 / OT-3).